Here is a 164-residue protein sequence, read N- to C-terminus: Large ribosomal subunit protein uL15 (164 aa).

A disordered region spans residues 1–52; the sequence is MSLSKLKAPKGANRERTRVGRGQGSGLGKTAGRGGKGQKARSGNMHFEGFEG. The segment covering 21–37 has biased composition (gly residues); it reads RGQGSGLGKTAGRGGKG.

Belongs to the universal ribosomal protein uL15 family. As to quaternary structure, part of the 50S ribosomal subunit.

Binds to the 23S rRNA. This is Large ribosomal subunit protein uL15 from Anaeromyxobacter sp. (strain Fw109-5).